The sequence spans 348 residues: Fructose-1,6-bisphosphatase class 1 (348 aa).

Residues Glu104, Asp126, Leu128, and Asp129 each contribute to the Mg(2+) site. Substrate-binding positions include 129-132, Asn221, Tyr249, and Lys279; that span reads DGSS. Glu285 provides a ligand contact to Mg(2+).

Belongs to the FBPase class 1 family. As to quaternary structure, homotetramer. Mg(2+) serves as cofactor.

The protein resides in the cytoplasm. The enzyme catalyses beta-D-fructose 1,6-bisphosphate + H2O = beta-D-fructose 6-phosphate + phosphate. It participates in carbohydrate biosynthesis; Calvin cycle. The chain is Fructose-1,6-bisphosphatase class 1 from Thermosynechococcus vestitus (strain NIES-2133 / IAM M-273 / BP-1).